Here is an 81-residue protein sequence, read N- to C-terminus: Protein Vpu (81 aa).

The Extracellular segment spans residues 1–7 (MQSLQIL). Residues 8-28 (AIVSLVVVAIIAIVVWTIVLI) traverse the membrane as a helical segment. Residues 29 to 81 (EYRKILRQRKIDRLFDRIREKAEDSGNESERDQEELSALVEMGHLAPWDVDDL) are Cytoplasmic-facing. Ser-53 and Ser-57 each carry phosphoserine; by host CK2.

The protein belongs to the HIV-1 VPU protein family. Homopentamer. Interacts with host CD4 and BRTC; these interactions induce proteasomal degradation of CD4. Interacts with host BST2; this interaction leads to the degradation of host BST2. Interacts with host FBXW11. Interacts with host AP1M1; this interaction plays a role in the mistrafficking and subsequent degradation of host BST2. Interacts with host RANBP2; this interaction allows Vpu to down-regulate host BLM sumoylation. Post-translationally, phosphorylated by host CK2. This phosphorylation is necessary for interaction with human BTRC and degradation of CD4.

Its subcellular location is the host membrane. Its activity is regulated as follows. Ion channel activity is inhibited by hexamethylene amiloride in vitro. Its function is as follows. Enhances virion budding by targeting host CD4 and Tetherin/BST2 to proteasome degradation. Degradation of CD4 prevents any unwanted premature interactions between viral Env and its host receptor CD4 in the endoplasmic reticulum. Degradation of antiretroviral protein Tetherin/BST2 is important for virion budding, as BST2 tethers new viral particles to the host cell membrane. Mechanistically, Vpu bridges either CD4 or BST2 to BTRC, a substrate recognition subunit of the Skp1/Cullin/F-box protein E3 ubiquitin ligase, induces their ubiquitination and subsequent proteasomal degradation. The alteration of the E3 ligase specificity by Vpu seems to promote the degradation of host IKBKB, leading to NF-kappa-B down-regulation and subsequent apoptosis. Acts as a viroporin that forms an oligomeric ion channel in membranes. Modulates the host DNA repair mechanisms to promote degradation of nuclear viral cDNA in cells that are already productively infected in order to suppress immune sensing and proviral hyper-integration (superinfection). Manipulates PML-NBs and modulates SUMOylation of host BLM protein thereby enhancing its DNA-end processing activity toward viral unintegrated linear DNA. Also inhibits RAD52-mediated homologous repair of viral cDNA, preventing the generation of dead-end circular forms of single copies of the long terminal repeat and permitting sustained nucleolytic attack. The sequence is that of Protein Vpu from Homo sapiens (Human).